Consider the following 94-residue polypeptide: Integration host factor subunit beta (94 aa).

This sequence belongs to the bacterial histone-like protein family. As to quaternary structure, heterodimer of an alpha and a beta chain.

Its function is as follows. This protein is one of the two subunits of integration host factor, a specific DNA-binding protein that functions in genetic recombination as well as in transcriptional and translational control. This Pectobacterium atrosepticum (strain SCRI 1043 / ATCC BAA-672) (Erwinia carotovora subsp. atroseptica) protein is Integration host factor subunit beta.